We begin with the raw amino-acid sequence, 108 residues long: Parvalbumin beta 2 (108 aa).

An N-acetylalanine modification is found at Ala1. EF-hand domains are found at residues Lys38–Gly73 and Leu77–Gly108. 11 residues coordinate Ca(2+): Asp51, Asp53, Ser55, Phe57, Glu59, Glu62, Asp90, Asp92, Asp94, Lys96, and Glu101.

The protein belongs to the parvalbumin family.

Its function is as follows. In muscle, parvalbumin is thought to be involved in relaxation after contraction. It binds two calcium ions. The protein is Parvalbumin beta 2 of Merluccius bilinearis (Silver hake).